Here is a 254-residue protein sequence, read N- to C-terminus: Small ribosomal subunit protein mS40 (254 aa).

The transit peptide at 1 to 33 (MAAPLRHTLLKLVPTLLRSSYVAQVPLQTLCTR) directs the protein to the mitochondrion. A Phosphoserine modification is found at Ser47. The disordered stretch occupies residues 218 to 254 (YQGNLLEESGPPPESMPEMPTTPPAESSIEQPGSQSA). Residues 227 to 240 (GPPPESMPEMPTTP) are compositionally biased toward pro residues.

It belongs to the bacterial ribosomal protein bS18 family. Mitochondrion-specific ribosomal protein mS40 subfamily. Component of the mitochondrial ribosome small subunit (28S) which comprises a 12S rRNA and about 30 distinct proteins.

Its subcellular location is the mitochondrion. The protein is Small ribosomal subunit protein mS40 (Mrps18b) of Mus musculus (Mouse).